A 123-amino-acid chain; its full sequence is NADH-quinone oxidoreductase subunit A (123 aa).

Helical transmembrane passes span 11-31 (YLPI…IMIL), 68-88 (LVAI…PWAI), and 93-113 (IGKM…IGFI).

The protein belongs to the complex I subunit 3 family. NDH-1 is composed of 14 different subunits. Subunits NuoA, H, J, K, L, M, N constitute the membrane sector of the complex.

It is found in the cell inner membrane. The enzyme catalyses a quinone + NADH + 5 H(+)(in) = a quinol + NAD(+) + 4 H(+)(out). In terms of biological role, NDH-1 shuttles electrons from NADH, via FMN and iron-sulfur (Fe-S) centers, to quinones in the respiratory chain. The immediate electron acceptor for the enzyme in this species is believed to be ubiquinone. Couples the redox reaction to proton translocation (for every two electrons transferred, four hydrogen ions are translocated across the cytoplasmic membrane), and thus conserves the redox energy in a proton gradient. The sequence is that of NADH-quinone oxidoreductase subunit A from Rickettsia prowazekii (strain Madrid E).